The chain runs to 443 residues: MSTDSIEVAIIGAGITGITLALGLLSRGIPVRVYERARDFHEIGAGIGFTPNAEWAMKVVDPRIQAAFKRVATPNASDWFQWVDGFNESGTDPRETEEQLLFKIYLGERGFEGCHRADFLGELARLLPEGVVTFQKALDTVEPAADNSLGQLLRFQDGTTATAHAVIGCDGIRSRVRQILLGEDHPAASAHYSHKYAARGLIPMDRAREALGEDKVATRFMHLGPDAHALTFPVSHGSLLNVVAFVTDPNPWPYADRWTAQGPKEDVTAAFSRFGPTMRTIIDLLPDPIDQWAVFDTYDHPPNTYSRGAVCIAGDAAHAAAPHHGAGAGCGVEDAAVLCAVLDMAAKRVDTAKDGTEGKAALITTAFETYDAVRRERAQWLVESSRVIGNLYEWQDKEVGSDASRCHDEVYWRSHRIWDYDIDAMMRETAEVFEARVAGVAKN.

Residues Ser-5–Leu-25 form a helical membrane-spanning segment. Positions 35 and 48 each coordinate FAD. N-linked (GlcNAc...) asparagine glycosylation is found at Asn-75 and Asn-87. Position 116 (Arg-116) interacts with FAD. Arg-199 is a catalytic residue. FAD-binding residues include Asp-315 and Ala-328.

It belongs to the paxM FAD-dependent monooxygenase family. The cofactor is FAD.

The protein resides in the membrane. Its pathway is secondary metabolite biosynthesis. Functionally, FAD-dependent monooxygenase; part of the gene cluster that mediates the biosynthesis of nigerpyrone and its derivatives carbonarone A and pestalamide A. The biosynthesis pathway begins with the polyketide assembly by epaA to form phenylacetyl triketide precursor from successive condensation of two malonyl-CoA, presumably with one phenylacetyl-CoA starter unit produced by the phenylacetyl-CoA ligase epaB. For the nigerpyrone biosynthesis, the reactive polyketide chain is released as an aldehyde through the R-domain. A nonenzymatic cyclization and dehydration may create nigerpyrone. For the biosynthesis of carbonarone A and pestalamide A, an extra methyl group is added through the C-methyltransferase domain. Several further steps involving the dehydrogenase orf1, the cytochrome P450 monooxygenase orf2 and the FAD-dependent monooxygenase orf3 are required to form a carbonarone A precursor which is converted to carbonarone A via cyclization. The O-acetyltransferase epaC could catalyze the transfer of 2-methylsuccinyl-CoA, a common intermediate in the ethylmalonyl-CoA pathway, to generate the final product pestalamide A. This Aspergillus niger (strain ATCC MYA-4892 / CBS 513.88 / FGSC A1513) protein is FAD-dependent monooxygenase orf3.